Here is a 413-residue protein sequence, read N- to C-terminus: Cardiolipin synthase B (413 aa).

PLD phosphodiesterase domains lie at valine 108–histidine 135 and arginine 285–serine 312. Residues histidine 113, lysine 115, aspartate 120, histidine 290, lysine 292, and aspartate 297 contribute to the active site. Residues threonine 388 to proline 413 form a disordered region.

The protein belongs to the phospholipase D family. Cardiolipin synthase subfamily. ClsB sub-subfamily.

The protein localises to the cell membrane. It carries out the reaction 2 a 1,2-diacyl-sn-glycero-3-phospho-(1'-sn-glycerol) = a cardiolipin + glycerol. In terms of biological role, catalyzes the phosphatidyl group transfer from one phosphatidylglycerol molecule to another to form cardiolipin (CL) (diphosphatidylglycerol) and glycerol. This chain is Cardiolipin synthase B, found in Shigella flexneri.